Here is a 263-residue protein sequence, read N- to C-terminus: Acyl-[acyl-carrier-protein]--UDP-N-acetylglucosamine O-acyltransferase (263 aa).

It belongs to the transferase hexapeptide repeat family. LpxA subfamily. Homotrimer.

It localises to the cytoplasm. It carries out the reaction a (3R)-hydroxyacyl-[ACP] + UDP-N-acetyl-alpha-D-glucosamine = a UDP-3-O-[(3R)-3-hydroxyacyl]-N-acetyl-alpha-D-glucosamine + holo-[ACP]. It functions in the pathway glycolipid biosynthesis; lipid IV(A) biosynthesis; lipid IV(A) from (3R)-3-hydroxytetradecanoyl-[acyl-carrier-protein] and UDP-N-acetyl-alpha-D-glucosamine: step 1/6. Involved in the biosynthesis of lipid A, a phosphorylated glycolipid that anchors the lipopolysaccharide to the outer membrane of the cell. The chain is Acyl-[acyl-carrier-protein]--UDP-N-acetylglucosamine O-acyltransferase from Tolumonas auensis (strain DSM 9187 / NBRC 110442 / TA 4).